The primary structure comprises 288 residues: Pantothenate synthetase (288 aa).

Residue 30–37 (MGNLHEGH) participates in ATP binding. The active-site Proton donor is His-37. Position 61 (Gln-61) interacts with (R)-pantoate. Gln-61 contributes to the beta-alanine binding site. 148 to 151 (GQKD) is a binding site for ATP. Position 154 (Gln-154) interacts with (R)-pantoate. ATP is bound by residues Val-177 and 185–188 (LSSR).

Belongs to the pantothenate synthetase family. In terms of assembly, homodimer.

It is found in the cytoplasm. The catalysed reaction is (R)-pantoate + beta-alanine + ATP = (R)-pantothenate + AMP + diphosphate + H(+). It participates in cofactor biosynthesis; (R)-pantothenate biosynthesis; (R)-pantothenate from (R)-pantoate and beta-alanine: step 1/1. Catalyzes the condensation of pantoate with beta-alanine in an ATP-dependent reaction via a pantoyl-adenylate intermediate. In Psychrobacter arcticus (strain DSM 17307 / VKM B-2377 / 273-4), this protein is Pantothenate synthetase.